Reading from the N-terminus, the 89-residue chain is Small ribosomal subunit protein uS15 (89 aa).

It belongs to the universal ribosomal protein uS15 family. Part of the 30S ribosomal subunit. Forms a bridge to the 50S subunit in the 70S ribosome, contacting the 23S rRNA.

In terms of biological role, one of the primary rRNA binding proteins, it binds directly to 16S rRNA where it helps nucleate assembly of the platform of the 30S subunit by binding and bridging several RNA helices of the 16S rRNA. Functionally, forms an intersubunit bridge (bridge B4) with the 23S rRNA of the 50S subunit in the ribosome. The chain is Small ribosomal subunit protein uS15 from Porphyromonas gingivalis (strain ATCC 33277 / DSM 20709 / CIP 103683 / JCM 12257 / NCTC 11834 / 2561).